We begin with the raw amino-acid sequence, 674 residues long: DNA ligase (674 aa).

Residues 35 to 39 (DYDFD), 84 to 85 (SL), and E118 contribute to the NAD(+) site. The active-site N6-AMP-lysine intermediate is K120. Residues R141, E184, K297, and K321 each contribute to the NAD(+) site. Zn(2+) is bound by residues C415, C418, C433, and C439. The BRCT domain maps to 598–674 (LVNTNFEGLT…ITEDEFDALL (77 aa)).

This sequence belongs to the NAD-dependent DNA ligase family. LigA subfamily. The cofactor is Mg(2+). Requires Mn(2+) as cofactor.

It carries out the reaction NAD(+) + (deoxyribonucleotide)n-3'-hydroxyl + 5'-phospho-(deoxyribonucleotide)m = (deoxyribonucleotide)n+m + AMP + beta-nicotinamide D-nucleotide.. DNA ligase that catalyzes the formation of phosphodiester linkages between 5'-phosphoryl and 3'-hydroxyl groups in double-stranded DNA using NAD as a coenzyme and as the energy source for the reaction. It is essential for DNA replication and repair of damaged DNA. The chain is DNA ligase from Chlorobium phaeovibrioides (strain DSM 265 / 1930) (Prosthecochloris vibrioformis (strain DSM 265)).